Reading from the N-terminus, the 156-residue chain is Small ribosomal subunit protein uS7 (156 aa).

This sequence belongs to the universal ribosomal protein uS7 family. As to quaternary structure, part of the 30S ribosomal subunit. Contacts proteins S9 and S11.

Functionally, one of the primary rRNA binding proteins, it binds directly to 16S rRNA where it nucleates assembly of the head domain of the 30S subunit. Is located at the subunit interface close to the decoding center, probably blocks exit of the E-site tRNA. In Pseudomonas syringae pv. tomato (strain ATCC BAA-871 / DC3000), this protein is Small ribosomal subunit protein uS7.